The following is a 348-amino-acid chain: Alpha-2-HS-glycoprotein (348 aa).

Positions 1 to 18 are cleaved as a signal peptide; the sequence is MKTLVLLLCFTLLWGCQS. In terms of domain architecture, Cystatin fetuin-A-type 1 spans 19-133; it reads APQGTGLGFR…QFSVMHTKCH (115 aa). Disulfide bonds link Cys-32-Cys-339, Cys-89-Cys-100, Cys-114-Cys-132, Cys-146-Cys-149, Cys-208-Cys-219, and Cys-230-Cys-247. Residue Asn-99 is glycosylated (N-linked (GlcNAc...) asparagine). 2 positions are modified to phosphoserine: Ser-134 and Ser-138. One can recognise a Cystatin fetuin-A-type 2 domain in the interval 144–255; sequence KVCPHCALLT…TCTAFPTQAN (112 aa). N-linked (GlcNAc...) asparagine glycans are attached at residues Asn-156 and Asn-176. Ser-307, Ser-311, Ser-314, and Ser-316 each carry phosphoserine.

It belongs to the fetuin family. Phosphorylated by FAM20C in the extracellular medium. As to expression, expressed by the liver and secreted in plasma.

It localises to the secreted. The sequence is that of Alpha-2-HS-glycoprotein (AHSG) from Meriones unguiculatus (Mongolian jird).